Consider the following 340-residue polypeptide: COP9 signalosome complex subunit 5 (340 aa).

Residues 52–189 form the MPN domain; the sequence is VRISATALIK…IGAFRTYPAD (138 aa). The Zn(2+) site is built by H135, H137, and D148. Residues 135 to 148 carry the JAMM motif motif; that stretch reads HSHPGYGCWLSGID.

The protein belongs to the peptidase M67A family. CSN5 subfamily. As to quaternary structure, component of the COP9 signalosome (CSN) complex.

The protein localises to the cytoplasm. Its subcellular location is the nucleus. Catalytic Component of the COP9 signalosome (CSN) complex that acts as an regulator of the ubiquitin (Ubl) conjugation pathway by mediating the deneddylation of the cullin subunit of SCF-type E3 ubiquitin-protein ligase complexes. This is COP9 signalosome complex subunit 5 (RRI1) from Gibberella zeae (strain ATCC MYA-4620 / CBS 123657 / FGSC 9075 / NRRL 31084 / PH-1) (Wheat head blight fungus).